The primary structure comprises 157 residues: Sorting nexin-3 (157 aa).

Residues methionine 1–glutamine 21 form a disordered region. A compositionally biased stretch (polar residues) spans valine 11–glutamine 21. Positions asparagine 32–proline 152 constitute a PX domain. A 1,2-diacyl-sn-glycero-3-phospho-(1D-myo-inositol-3-phosphate) contacts are provided by arginine 75, serine 77, lysine 101, and arginine 117.

Belongs to the sorting nexin family.

The protein localises to the cytoplasm. It localises to the golgi apparatus membrane. The protein resides in the prevacuolar compartment membrane. Functionally, required for retention of late Golgi membrane proteins. Component of the retrieval machinery that functions by direct interaction with the cytosolic tails of certain TGN membrane proteins during the sorting/budding process at the prevacuolar compartment. Binds phosphatidylinositol 3-phosphate (PtdIns(P3)). The sequence is that of Sorting nexin-3 (SNX3) from Candida albicans (strain SC5314 / ATCC MYA-2876) (Yeast).